A 249-amino-acid polypeptide reads, in one-letter code: 2,3-bisphosphoglycerate-dependent phosphoglycerate mutase (249 aa).

Substrate-binding positions include 9 to 16, 22 to 23, arginine 61, 88 to 91, lysine 99, 115 to 116, and 184 to 185; these read RHGQSQWN, TG, ERHY, RR, and GN. Histidine 10 (tele-phosphohistidine intermediate) is an active-site residue. The active-site Proton donor/acceptor is glutamate 88.

Belongs to the phosphoglycerate mutase family. BPG-dependent PGAM subfamily. In terms of assembly, homodimer.

It catalyses the reaction (2R)-2-phosphoglycerate = (2R)-3-phosphoglycerate. Its pathway is carbohydrate degradation; glycolysis; pyruvate from D-glyceraldehyde 3-phosphate: step 3/5. In terms of biological role, catalyzes the interconversion of 2-phosphoglycerate and 3-phosphoglycerate. The protein is 2,3-bisphosphoglycerate-dependent phosphoglycerate mutase of Xylella fastidiosa (strain M12).